The following is a 183-amino-acid chain: Ribonuclease M5 (183 aa).

The 85-residue stretch at 6–90 (KEVIVVEGKD…AYISRVSGTK (85 aa)) folds into the Toprim domain. Mg(2+)-binding residues include E12, D59, and D61.

The protein belongs to the ribonuclease M5 family. Mg(2+) serves as cofactor.

It is found in the cytoplasm. It catalyses the reaction Endonucleolytic cleavage of RNA, removing 21 and 42 nucleotides, respectively, from the 5'- and 3'-termini of a 5S-rRNA precursor.. Its function is as follows. Required for correct processing of both the 5' and 3' ends of 5S rRNA precursor. Cleaves both sides of a double-stranded region yielding mature 5S rRNA in one step. The sequence is that of Ribonuclease M5 from Fusobacterium nucleatum subsp. nucleatum (strain ATCC 25586 / DSM 15643 / BCRC 10681 / CIP 101130 / JCM 8532 / KCTC 2640 / LMG 13131 / VPI 4355).